Consider the following 320-residue polypeptide: Probable cell division protein WhiA (320 aa).

Positions 282–315 form a DNA-binding region, H-T-H motif; it reads SLEELGRAARPQISKDAVAGRIRRLLQRAEKAEQ.

It belongs to the WhiA family.

In terms of biological role, involved in cell division and chromosome segregation. The polypeptide is Probable cell division protein WhiA (Bifidobacterium animalis subsp. lactis (strain AD011)).